The sequence spans 206 residues: Large ribosomal subunit protein uL4 (206 aa).

The interval G47–S77 is disordered. Positions K63–S77 are enriched in basic residues.

This sequence belongs to the universal ribosomal protein uL4 family. Part of the 50S ribosomal subunit.

In terms of biological role, one of the primary rRNA binding proteins, this protein initially binds near the 5'-end of the 23S rRNA. It is important during the early stages of 50S assembly. It makes multiple contacts with different domains of the 23S rRNA in the assembled 50S subunit and ribosome. Functionally, forms part of the polypeptide exit tunnel. The chain is Large ribosomal subunit protein uL4 from Carboxydothermus hydrogenoformans (strain ATCC BAA-161 / DSM 6008 / Z-2901).